A 62-amino-acid chain; its full sequence is Large ribosomal subunit protein uL30 (62 aa).

The protein belongs to the universal ribosomal protein uL30 family. As to quaternary structure, part of the 50S ribosomal subunit.

The chain is Large ribosomal subunit protein uL30 from Marinobacter nauticus (strain ATCC 700491 / DSM 11845 / VT8) (Marinobacter aquaeolei).